The sequence spans 188 residues: UPF0301 protein Tcr_1827 (188 aa).

It belongs to the UPF0301 (AlgH) family.

The protein is UPF0301 protein Tcr_1827 of Hydrogenovibrio crunogenus (strain DSM 25203 / XCL-2) (Thiomicrospira crunogena).